Reading from the N-terminus, the 102-residue chain is UPF0213 protein Spro_0507 (102 aa).

The 76-residue stretch at 6–81 folds into the GIY-YIG domain; sequence PTWHLYMLRM…KQLSKTQKER (76 aa).

It belongs to the UPF0213 family.

The chain is UPF0213 protein Spro_0507 from Serratia proteamaculans (strain 568).